Reading from the N-terminus, the 215-residue chain is Cytochrome b6 (215 aa).

Residues 32-52 (IFYCIGGITFTCFIMQVASGF) traverse the membrane as a helical segment. Heme c is bound at residue cysteine 35. The heme b site is built by histidine 86 and histidine 100. Helical transmembrane passes span 90-110 (ASMM…TGGF), 116-136 (LTWV…VTGY), and 186-206 (LHTF…FLMI). Heme b is bound by residues histidine 187 and histidine 202.

It belongs to the cytochrome b family. PetB subfamily. In terms of assembly, the 4 large subunits of the cytochrome b6-f complex are cytochrome b6, subunit IV (17 kDa polypeptide, PetD), cytochrome f and the Rieske protein, while the 4 small subunits are PetG, PetL, PetM and PetN. The complex functions as a dimer. The cofactor is heme b. Requires heme c as cofactor.

It is found in the plastid. The protein resides in the chloroplast thylakoid membrane. Its function is as follows. Component of the cytochrome b6-f complex, which mediates electron transfer between photosystem II (PSII) and photosystem I (PSI), cyclic electron flow around PSI, and state transitions. This is Cytochrome b6 from Mesostigma viride (Green alga).